Here is a 222-residue protein sequence, read N- to C-terminus: Elongation factor 1-beta' (222 aa).

The disordered stretch occupies residues 71–113; the sequence is SQGTSPLTAGAKPTAPAPAAKDDDDDDVDLFGSGDEEEDAEAE. A compositionally biased stretch (low complexity) spans 78–89; that stretch reads TAGAKPTAPAPA. Residues 92–111 show a composition bias toward acidic residues; the sequence is DDDDDDVDLFGSGDEEEDAE.

This sequence belongs to the EF-1-beta/EF-1-delta family. EF-1 is composed of 4 subunits: alpha, beta, beta' and gamma. In terms of processing, phosphorylated.

In terms of biological role, EF-1-beta and EF-1-beta' stimulate the exchange of GDP bound to EF-1-alpha to GTP. The protein is Elongation factor 1-beta' of Bombyx mori (Silk moth).